Consider the following 243-residue polypeptide: 3-deoxy-manno-octulosonate cytidylyltransferase (243 aa).

It belongs to the KdsB family.

The protein localises to the cytoplasm. It carries out the reaction 3-deoxy-alpha-D-manno-oct-2-ulosonate + CTP = CMP-3-deoxy-beta-D-manno-octulosonate + diphosphate. Its pathway is nucleotide-sugar biosynthesis; CMP-3-deoxy-D-manno-octulosonate biosynthesis; CMP-3-deoxy-D-manno-octulosonate from 3-deoxy-D-manno-octulosonate and CTP: step 1/1. It participates in bacterial outer membrane biogenesis; lipopolysaccharide biosynthesis. Functionally, activates KDO (a required 8-carbon sugar) for incorporation into bacterial lipopolysaccharide in Gram-negative bacteria. The protein is 3-deoxy-manno-octulosonate cytidylyltransferase of Helicobacter pylori (strain HPAG1).